A 166-amino-acid chain; its full sequence is Large ribosomal subunit protein mL49 (166 aa).

Belongs to the mitochondrion-specific ribosomal protein mL49 family. In terms of assembly, component of the mitochondrial ribosome large subunit (39S) which comprises a 16S rRNA and about 50 distinct proteins. Interacts with OXA1L.

It is found in the mitochondrion. This chain is Large ribosomal subunit protein mL49 (MRPL49), found in Bos taurus (Bovine).